A 305-amino-acid polypeptide reads, in one-letter code: Homeobox protein ceh-23 (305 aa).

Disordered regions lie at residues 113-140 (ASCPEPPASSQATVTLQVPSTGSPERRR) and 262-305 (RRSK…KVLN). Residues 120 to 135 (ASSQATVTLQVPSTGS) are compositionally biased toward polar residues. The segment at residues 211 to 270 (HRKARTIYGTTQTQQLEDMFKGQMYVVGAERENLAQRLGLSPSQVRIWFQNRRSKHRRKQ) is a DNA-binding region (homeobox). Acidic residues predominate over residues 287 to 305 (GKDEEEDDEEDEDDVKVLN).

This sequence belongs to the distal-less homeobox family.

The protein resides in the nucleus. Probable transcription factor. Required for differentiation of AIY interneurons, acting downstream of LIM/homeobox protein ttx-3. Modulates gene expression, acting downstream of AMP kinase aak-2/AMPK signaling. Modulates lifespan. This is Homeobox protein ceh-23 (ceh-23) from Caenorhabditis elegans.